The chain runs to 205 residues: Dephospho-CoA kinase (205 aa).

In terms of domain architecture, DPCK spans 7–205; the sequence is IIGITGRIAS…QEIINYERFE (199 aa). 15-20 serves as a coordination point for ATP; sequence ASGKDA.

This sequence belongs to the CoaE family.

It localises to the cytoplasm. The catalysed reaction is 3'-dephospho-CoA + ATP = ADP + CoA + H(+). It functions in the pathway cofactor biosynthesis; coenzyme A biosynthesis; CoA from (R)-pantothenate: step 5/5. Catalyzes the phosphorylation of the 3'-hydroxyl group of dephosphocoenzyme A to form coenzyme A. The sequence is that of Dephospho-CoA kinase from Borrelia garinii subsp. bavariensis (strain ATCC BAA-2496 / DSM 23469 / PBi) (Borreliella bavariensis).